Here is a 172-residue protein sequence, read N- to C-terminus: CD-NTase-associated protein 7 (172 aa).

A required for binding to CdnC and to confer phage immunity region spans residues 141-172 (AQSPGINGYLENDKTYSAGGRSLTRTSVRNFV).

The protein belongs to the bacterial HORMA family. HORMA1 subfamily. Forms complexes with CdnC with 1:1 and 2:2 stoichimetry, and a 1:1:6 CdnC:Cap7:Cap6 complex.

Functionally, sensor protein of a CBASS antivirus system. CBASS (cyclic oligonucleotide-based antiphage signaling system) provides immunity against bacteriophage. The CD-NTase protein synthesizes cyclic nucleotides in response to infection; these serve as specific second messenger signals. The signals activate a diverse range of effectors, leading to bacterial cell death and thus abortive phage infection. A type III-C(AAA) CBASS system. Its function is as follows. Binds to a closure peptide (consensus His-Xaa-Xaa-Ile-Leu-Leu-Thr), which allows it to activate CdnC for second messenger synthesis. In terms of biological role, protects E.coli strain JP313 against bacteriophage lambda cI- infection. When the cdnC-cap7-cap6-nucC operon is transformed into a susceptible strain it confers bacteriophage immunity. Mutations in the sensor (Cap7 also called HORMA) or effector proteins (CdnC, NucC) but not the disassembly protein (Cap6 also called Trip13) no longer confer immunity. The presence of the intact operon leads to culture collapse and cell death, which occurs before the phage has finished its replication cycle, thus protecting non-infected bacteria by aborting the phage infection and preventing its propagation. The protein is CD-NTase-associated protein 7 of Escherichia coli (strain MS 115-1).